The primary structure comprises 480 residues: tRNA-2-methylthio-N(6)-dimethylallyladenosine synthase (480 aa).

The MTTase N-terminal domain maps to 3 to 120 (KKLYIKTWGC…LPEMLNQLQH (118 aa)). Residues C12, C49, C83, C157, C161, and C164 each contribute to the [4Fe-4S] cluster site. Positions 143 to 375 (KADGASAFVS…QEQITHQALR (233 aa)) constitute a Radical SAM core domain. A TRAM domain is found at 378 to 441 (RQMLNTEQRV…ANSLRGELVR (64 aa)).

The protein belongs to the methylthiotransferase family. MiaB subfamily. Monomer. [4Fe-4S] cluster serves as cofactor.

The protein resides in the cytoplasm. It catalyses the reaction N(6)-dimethylallyladenosine(37) in tRNA + (sulfur carrier)-SH + AH2 + 2 S-adenosyl-L-methionine = 2-methylsulfanyl-N(6)-dimethylallyladenosine(37) in tRNA + (sulfur carrier)-H + 5'-deoxyadenosine + L-methionine + A + S-adenosyl-L-homocysteine + 2 H(+). Catalyzes the methylthiolation of N6-(dimethylallyl)adenosine (i(6)A), leading to the formation of 2-methylthio-N6-(dimethylallyl)adenosine (ms(2)i(6)A) at position 37 in tRNAs that read codons beginning with uridine. The sequence is that of tRNA-2-methylthio-N(6)-dimethylallyladenosine synthase from Colwellia psychrerythraea (strain 34H / ATCC BAA-681) (Vibrio psychroerythus).